Consider the following 325-residue polypeptide: Xylosidase/arabinosidase (325 aa).

The active-site Proton acceptor is Asp16. Glu224 serves as the catalytic Proton donor.

This sequence belongs to the glycosyl hydrolase 43 family.

It catalyses the reaction Hydrolysis of (1-&gt;4)-beta-D-xylans, to remove successive D-xylose residues from the non-reducing termini.. The enzyme catalyses Hydrolysis of terminal non-reducing alpha-L-arabinofuranoside residues in alpha-L-arabinosides.. This chain is Xylosidase/arabinosidase (xsa), found in Bacteroides ovatus.